The chain runs to 359 residues: MNEPSPSDWHLDAYDYELPPDRIAQSAVEPRDHARLLVFPDREQLWHRHFYDLPQLLRPGDLLIVNDTRVIPARLYGQKIETGVPVEVLLVEEHGPGYWLTLVKPGKRLKPGSAIAFGPNPEDPLLVADVEASDPATGGRWLRFRGEAEAFWSQLATLGEMPLPPYIHTTASDPERYQTVYSRELGAVAAPTAGLHFTPELLTTLADMGIATAPVTLHVGIGTFRSVDVEDIRQHEMHSERMMVPAATVEKIQATKAAGGRVIAVGTTSVRAIEGAAASGELKPGSDRVNLFIYPGYRWQIIDGLITNFHLPRSSLMMLVSALIGRDRLLSAYATAIAEQYRFYSFGDAMLILPDAKLP.

It belongs to the QueA family. As to quaternary structure, monomer.

The protein localises to the cytoplasm. It carries out the reaction 7-aminomethyl-7-carbaguanosine(34) in tRNA + S-adenosyl-L-methionine = epoxyqueuosine(34) in tRNA + adenine + L-methionine + 2 H(+). The protein operates within tRNA modification; tRNA-queuosine biosynthesis. Transfers and isomerizes the ribose moiety from AdoMet to the 7-aminomethyl group of 7-deazaguanine (preQ1-tRNA) to give epoxyqueuosine (oQ-tRNA). The protein is S-adenosylmethionine:tRNA ribosyltransferase-isomerase of Synechococcus elongatus (strain ATCC 33912 / PCC 7942 / FACHB-805) (Anacystis nidulans R2).